Consider the following 442-residue polypeptide: tRNA modification GTPase MnmE (442 aa).

The (6S)-5-formyl-5,6,7,8-tetrahydrofolate site is built by arginine 27, glutamate 84, and lysine 124. Residues glycine 221–glutamate 366 enclose the TrmE-type G domain. Residues asparagine 231–serine 236, serine 250–threonine 256, and aspartate 275–glycine 278 contribute to the GTP site. Residues serine 235 and threonine 256 each coordinate Mg(2+). Lysine 442 is a (6S)-5-formyl-5,6,7,8-tetrahydrofolate binding site.

Belongs to the TRAFAC class TrmE-Era-EngA-EngB-Septin-like GTPase superfamily. TrmE GTPase family. As to quaternary structure, homodimer. Heterotetramer of two MnmE and two MnmG subunits. The cofactor is K(+).

It localises to the cytoplasm. In terms of biological role, exhibits a very high intrinsic GTPase hydrolysis rate. Involved in the addition of a carboxymethylaminomethyl (cmnm) group at the wobble position (U34) of certain tRNAs, forming tRNA-cmnm(5)s(2)U34. In Brucella suis (strain ATCC 23445 / NCTC 10510), this protein is tRNA modification GTPase MnmE.